A 269-amino-acid chain; its full sequence is Phosphate import ATP-binding protein PstB 1 (269 aa).

Positions 16-255 (FTTQNLDIYY…DRTGKVFGDP (240 aa)) constitute an ABC transporter domain. 48-55 (GPSGCGKS) is an ATP binding site.

Belongs to the ABC transporter superfamily. Phosphate importer (TC 3.A.1.7) family. In terms of assembly, the complex is composed of two ATP-binding proteins (PstB), two transmembrane proteins (PstC and PstA) and a solute-binding protein (PstS).

The protein resides in the cell inner membrane. The catalysed reaction is phosphate(out) + ATP + H2O = ADP + 2 phosphate(in) + H(+). Part of the ABC transporter complex PstSACB involved in phosphate import. Responsible for energy coupling to the transport system. This Synechocystis sp. (strain ATCC 27184 / PCC 6803 / Kazusa) protein is Phosphate import ATP-binding protein PstB 1.